A 172-amino-acid chain; its full sequence is Large ribosomal subunit protein uL10 (172 aa).

Belongs to the universal ribosomal protein uL10 family. As to quaternary structure, part of the ribosomal stalk of the 50S ribosomal subunit. The N-terminus interacts with L11 and the large rRNA to form the base of the stalk. The C-terminus forms an elongated spine to which L12 dimers bind in a sequential fashion forming a multimeric L10(L12)X complex.

Functionally, forms part of the ribosomal stalk, playing a central role in the interaction of the ribosome with GTP-bound translation factors. This chain is Large ribosomal subunit protein uL10, found in Clostridium tetani (strain Massachusetts / E88).